Reading from the N-terminus, the 199-residue chain is Prolactin-2 (199 aa).

Cystine bridges form between Cys4–Cys11, Cys58–Cys174, and Cys191–Cys199.

This sequence belongs to the somatotropin/prolactin family.

It localises to the secreted. The sequence is that of Prolactin-2 from Crocodylus novaeguineae (Crocodile).